The following is a 696-amino-acid chain: Methionine--tRNA ligase (696 aa).

Residues 12–22 carry the 'HIGH' region motif; the sequence is PYANGAIHLGH. Zn(2+) contacts are provided by Cys143, Cys146, Cys156, and Cys159. A 'KMSKS' region motif is present at residues 336–340; it reads KMSKS. ATP is bound at residue Lys339. The segment at 556–580 is disordered; it reads SLAPAPEAQSQQRHAEHQQNEVTAE. The region spanning 591–696 is the tRNA-binding domain; sequence DFMKVDLRIV…SGAQPGMRVK (106 aa).

It belongs to the class-I aminoacyl-tRNA synthetase family. MetG type 1 subfamily. As to quaternary structure, homodimer. Zn(2+) is required as a cofactor.

It is found in the cytoplasm. The enzyme catalyses tRNA(Met) + L-methionine + ATP = L-methionyl-tRNA(Met) + AMP + diphosphate. Functionally, is required not only for elongation of protein synthesis but also for the initiation of all mRNA translation through initiator tRNA(fMet) aminoacylation. The polypeptide is Methionine--tRNA ligase (Dechloromonas aromatica (strain RCB)).